Reading from the N-terminus, the 646-residue chain is Major capsid protein (646 aa).

Belongs to the NCLDV major capsid protein family. In terms of assembly, homotrimer. The membrane-bound form, but not the cytosolic one, assembles into large complexes. Interacts with the minor capsid proteins M1249L and p17; these interactions form a rigid zipper structure that stabilizes the capsomers.

The protein localises to the virion. It localises to the host endoplasmic reticulum membrane. Its subcellular location is the host cytoplasm. It is found in the host cytosol. Capsid protein that self-assembles to form the pseudo-hexameric capsomers of the icosahedral capsid. The capsid is constructed of 2760 pseudo-hexameric capsomers and 12 pentameric capsomers, with a T=277 symmetry, about 200 nm in diameter. The capsid encapsulates the DNA-containing nucleoid, the core shell and the inner membrane. Plays an essential role in virion assembly. Involved in virus attachment to the host cell. The polypeptide is Major capsid protein (Ornithodoros (relapsing fever ticks)).